Reading from the N-terminus, the 352-residue chain is SKP1-like protein 20 (352 aa).

The interaction with the F-box domain of F-box proteins stretch occupies residues 108–167 (TSAADSLQLKPLVDLTSRALARIIEGKNPEEIREIFHLPDDLTEEEKLEPLKNSMDDPRI). 2 disordered regions span residues 214-251 (KAVK…RSKQ) and 267-288 (LLSA…DIDD). Over residues 216-230 (VKMSKGKKKKKKKKD) the composition is skewed to basic residues. Over residues 239-249 (IHDKESHDLRS) the composition is skewed to basic and acidic residues.

Belongs to the SKP1 family. In terms of assembly, part of a SCF (SKP1-cullin-F-box) protein ligase complex. Expressed in young seedlings, roots, leaves, floral stems, inflorescences, and siliques.

The protein resides in the nucleus. Its pathway is protein modification; protein ubiquitination. Involved in ubiquitination and subsequent proteasomal degradation of target proteins. Together with CUL1, RBX1 and a F-box protein, it forms a SCF E3 ubiquitin ligase complex. The functional specificity of this complex depends on the type of F-box protein. In the SCF complex, it serves as an adapter that links the F-box protein to CUL1. The chain is SKP1-like protein 20 (ASK20) from Arabidopsis thaliana (Mouse-ear cress).